The primary structure comprises 86 residues: Large ribosomal subunit protein uL23 (86 aa).

The protein belongs to the universal ribosomal protein uL23 family. In terms of assembly, part of the 50S ribosomal subunit. Contacts protein L29.

In terms of biological role, binds to 23S rRNA. One of the proteins that surrounds the polypeptide exit tunnel on the outside of the ribosome. This chain is Large ribosomal subunit protein uL23, found in Pyrococcus abyssi (strain GE5 / Orsay).